A 220-amino-acid chain; its full sequence is Small ribosomal subunit protein uS3c (220 aa).

Positions 48–119 (VQKHTNNPFH…KLCLILIKID (72 aa)) constitute a KH type-2 domain.

Belongs to the universal ribosomal protein uS3 family. Part of the 30S ribosomal subunit.

Its subcellular location is the plastid. It is found in the chloroplast. This is Small ribosomal subunit protein uS3c (rps3) from Psilotum nudum (Whisk fern).